The sequence spans 167 residues: NAD(P)H-quinone oxidoreductase subunit I, chloroplastic (167 aa).

2 consecutive 4Fe-4S ferredoxin-type domains span residues 55 to 84 (GRIH…VDWK) and 95 to 124 (LNYS…MTEE). The [4Fe-4S] cluster site is built by C64, C67, C70, C74, C104, C107, C110, and C114.

This sequence belongs to the complex I 23 kDa subunit family. NDH is composed of at least 16 different subunits, 5 of which are encoded in the nucleus. The cofactor is [4Fe-4S] cluster.

Its subcellular location is the plastid. It localises to the chloroplast thylakoid membrane. It carries out the reaction a plastoquinone + NADH + (n+1) H(+)(in) = a plastoquinol + NAD(+) + n H(+)(out). The enzyme catalyses a plastoquinone + NADPH + (n+1) H(+)(in) = a plastoquinol + NADP(+) + n H(+)(out). Functionally, NDH shuttles electrons from NAD(P)H:plastoquinone, via FMN and iron-sulfur (Fe-S) centers, to quinones in the photosynthetic chain and possibly in a chloroplast respiratory chain. The immediate electron acceptor for the enzyme in this species is believed to be plastoquinone. Couples the redox reaction to proton translocation, and thus conserves the redox energy in a proton gradient. This Aethionema grandiflorum (Persian stone-cress) protein is NAD(P)H-quinone oxidoreductase subunit I, chloroplastic.